Reading from the N-terminus, the 448-residue chain is tRNA wybutosine-synthesizing protein 2 homolog (448 aa).

Residues serine 218, lysine 225, glutamate 265, and 293–294 (DN) each bind S-adenosyl-L-methionine.

It belongs to the class I-like SAM-binding methyltransferase superfamily. TRM5/TYW2 family.

It catalyses the reaction 4-demethylwyosine(37) in tRNA(Phe) + S-adenosyl-L-methionine = 4-demethyl-7-[(3S)-3-amino-3-carboxypropyl]wyosine(37) in tRNA(Phe) + S-methyl-5'-thioadenosine + H(+). Its pathway is tRNA modification; wybutosine-tRNA(Phe) biosynthesis. Functionally, S-adenosyl-L-methionine-dependent transferase that acts as a component of the wybutosine biosynthesis pathway. Wybutosine is a hyper modified guanosine with a tricyclic base found at the 3'-position adjacent to the anticodon of eukaryotic phenylalanine tRNA. Catalyzes the transfer of the alpha-amino-alpha-carboxypropyl (acp) group from S-adenosyl-L-methionine to the C-7 position of 4-demethylwyosine (imG-14) to produce wybutosine-86. This is tRNA wybutosine-synthesizing protein 2 homolog (TRMT12) from Macaca fascicularis (Crab-eating macaque).